A 406-amino-acid chain; its full sequence is MRVVAAMSGGVDSAVAAARALEAGHEVIGVHLALSQSPEAVRAGSRGCCSLEDSADARRVADKLGIPFYVWDFSDRFKADVIDNFVDSYAIGETPNPCLRCNEKIKFEALLDRSIALGFDAVVTGHYAQLHDGVLRRGVDADKDQSYVLGVLTDEQLAHCMFPVGDTVKPEIREEAADAGFGVANKPDSHDICFIPDGRTQAFLGSKIGLRPGLVRDTGGETVAEHDGVYGFTVGQRKGLGLPRETLDGRPRYVTDIDAHTGTVTVGTREDLRVGGIIADRLKRLDPEVHGREFDCEVQVRAHGGVVPARARLVDDPTPVTPAGRVKEADELPWRLELELLQPLEGVARGQAAVVYRPDEDGDILLGSGTIRATTALGAPIEEQPAPGTVGAVDADAIEQGEDAQR.

ATP-binding positions include 6 to 13 (AMSGGVDS) and leucine 32. Cysteine 101 serves as the catalytic Nucleophile. Residues cysteine 101 and cysteine 193 are joined by a disulfide bond. Glycine 125 is a binding site for ATP. The segment at 143-145 (KDQ) is interaction with tRNA. The active-site Cysteine persulfide intermediate is cysteine 193. Positions 378–406 (GAPIEEQPAPGTVGAVDADAIEQGEDAQR) are disordered. Over residues 396 to 406 (DAIEQGEDAQR) the composition is skewed to acidic residues.

This sequence belongs to the MnmA/TRMU family.

It is found in the cytoplasm. It catalyses the reaction S-sulfanyl-L-cysteinyl-[protein] + uridine(34) in tRNA + AH2 + ATP = 2-thiouridine(34) in tRNA + L-cysteinyl-[protein] + A + AMP + diphosphate + H(+). Catalyzes the 2-thiolation of uridine at the wobble position (U34) of tRNA, leading to the formation of s(2)U34. The polypeptide is tRNA-specific 2-thiouridylase MnmA (Corynebacterium urealyticum (strain ATCC 43042 / DSM 7109)).